The following is a 519-amino-acid chain: NADH dehydrogenase (519 aa).

The interval Met-1–Gly-183 is membrane-binding. Positions Arg-184–Lys-519 are catalytic. Asp-210–Phe-241 is an FAD binding site. A disulfide bond links Cys-337 and Cys-340. Asp-349–Met-379 is a binding site for NAD(+). Thr-469 to Asp-479 contributes to the FAD binding site.

The protein belongs to the class-II pyridine nucleotide-disulfide oxidoreductase family. In terms of assembly, homodimer. The cofactor is FAD.

The protein localises to the cell membrane. It catalyses the reaction a ubiquinone + NADH + 5 H(+)(in) = a ubiquinol + NAD(+) + 4 H(+)(out). Functionally, transfer of electrons from NADH to the respiratory chain. The immediate electron acceptor for the enzyme is believed to be ubiquinone. This chain is NADH dehydrogenase (ahpF), found in Ferdinandcohnia aciditolerans (strain JCM 32973 / CCTCC AB 2017280 / YN-1) (Bacillus aciditolerans).